The sequence spans 381 residues: Gustatory and pheromone receptor 39a, isoform C (381 aa).

Residues 1–37 (MDFQPGELCAYYRLCRYLGIFCIDYNPTKKKFRLRRS) are Cytoplasmic-facing. A helical transmembrane segment spans residues 38 to 58 (VLCYIVHFALQAYLVGCISVM). At 59–79 (VTYWRRCFKSELTTTGNHFDR) the chain is on the extracellular side. A helical membrane pass occupies residues 80 to 100 (LVMVIALGILVVQNAWLIWLQ). The Cytoplasmic portion of the chain corresponds to 101-129 (APHLRIVRQIEFYRRNHLANVRLLLPKRL). A helical membrane pass occupies residues 130 to 150 (LWLIIATNVVYMANFIKTCIF). At 151-171 (EWLTDASRLFVITSLGFPLRY) the chain is on the extracellular side. The chain crosses the membrane as a helical span at residues 172 to 192 (LVTSFTMGTYFCMVHIVRLVL). The Cytoplasmic portion of the chain corresponds to 193–239 (DWNQSQINAIIDESADLKMTSPNRLRLRVCLEMHDRLMLLCNDEISL). The chain crosses the membrane as a helical span at residues 240–260 (VYGFIAWLSWMFASLDVTGVI). Residues 261-271 (YLTMVIQTKKS) lie on the Extracellular side of the membrane. A helical transmembrane segment spans residues 272-292 (IVLKLITNVVWLSPTFMTCAA). At 293-350 (SFMSNRVTIQANKTAKMLTKVPRTGTGLDRMIEKFLLKNLRQKPILTAYGFFALDKST) the chain is on the cytoplasmic side. Residues 351–371 (LFKLFTAIFTYMVILVQFKEM) form a helical membrane-spanning segment. Residues 372-381 (ENSTKSINKF) are Extracellular-facing. A glycan (N-linked (GlcNAc...) asparagine) is linked at Asn-373.

Belongs to the insect chemoreceptor superfamily. Gustatory receptor (GR) family. Gr21a subfamily. In terms of tissue distribution, expressed in the adult labellar chemosensory neurons. In larvae, is expressed in neurons of the terminal external chemosensory organ, as well as in the dorsal pharyngeal sense organ.

The protein localises to the cell membrane. Its function is as follows. Gustatory receptor which mediates acceptance or avoidance behavior, depending on its substrates. Plays a role in sustaining courtship behavior in males, possibly through the reception of a stimulating arrestant pheromone. This is Gustatory and pheromone receptor 39a, isoform C (Gr39a) from Drosophila melanogaster (Fruit fly).